We begin with the raw amino-acid sequence, 217 residues long: Choline transport system permease protein OpuBB (217 aa).

Positions 19 to 198 (TYEHITISLI…ILAIVIDYVL (180 aa)) constitute an ABC transmembrane type-1 domain. 6 helical membrane passes run 23–43 (ITISLIAVILGVLVAVPLGVV), 52–74 (GTIIGIVNIIQTLPSLAILAFFI), 84–101 (AIVALFFYSVLPILRNTY), 128–148 (LVELPLAAPVIMAGIRTSTIY), 150–170 (IGWATLASFIGGGGLGDYIFI), and 180–200 (IIGGAVPVTILAIVIDYVLAV).

The protein belongs to the binding-protein-dependent transport system permease family. CysTW subfamily.

The protein resides in the cell membrane. Functionally, involved in a high affinity multicomponent binding-protein-dependent transport system for choline; probably responsible for the translocation of the substrate across the membrane. This is Choline transport system permease protein OpuBB (opuBB) from Bacillus subtilis (strain 168).